A 264-amino-acid chain; its full sequence is Apolipoprotein A-I (264 aa).

The first 18 residues, 1-18 (MRGVLVTLAVLFLTGTQA), serve as a signal peptide directing secretion. 2 repeat units span residues 67–88 (LKLA…EDMT) and 89–110 (PYYR…AELT). The tract at residues 67–264 (LKLADNLDTL…LLDEVQKTMA (198 aa)) is 10 X approximate tandem repeats. The 3; half-length repeat unit spans residues 111 to 121 (KDLEEVKEKIR). Repeat copies occupy residues 122 to 143 (PFLD…QRLA), 144 to 165 (PVAQ…AKLT), 166 to 187 (PVAE…KNLA), 188 to 209 (PYSS…ERGI), and 210 to 231 (PQAS…EKMT). One copy of the 9; half-length repeat lies at 232–242 (PLVQEFKERLT). The stretch at 243–264 (PYAENLKNRLIDLLDEVQKTMA) is repeat 10.

This sequence belongs to the apolipoprotein A1/A4/E family. As to expression, major protein of VLDL, HDL, LDL and in chylomicrons. Expressed in a number of tissues including liver, small intestine, lung, kidney, heart and muscle with highest expression in liver and small intestine.

The protein resides in the secreted. Participates in the reverse transport of cholesterol from tissues to the liver for excretion by promoting cholesterol efflux from tissues and by acting as a cofactor for the lecithin cholesterol acyltransferase (LCAT). This is Apolipoprotein A-I (APOA1) from Coturnix japonica (Japanese quail).